Reading from the N-terminus, the 473-residue chain is Photosystem II CP43 reaction center protein (473 aa).

Residues 1–14 (MKILYSLRRFYHVE) constitute a propeptide that is removed on maturation. Threonine 15 is subject to N-acetylthreonine. At threonine 15 the chain carries Phosphothreonine. Helical transmembrane passes span 69–93 (LFEV…PHLA), 134–155 (LLGP…KDRN), 178–200 (KALY…RKIT), 255–275 (KPFA…LSYS), and 291–312 (WFNN…ASQA). Glutamate 367 serves as a coordination point for [CaMn4O5] cluster. The helical transmembrane segment at 447–471 (RARAAAAGFEKGIDRDLEPVLYMNP) threads the bilayer.

It belongs to the PsbB/PsbC family. PsbC subfamily. As to quaternary structure, PSII is composed of 1 copy each of membrane proteins PsbA, PsbB, PsbC, PsbD, PsbE, PsbF, PsbH, PsbI, PsbJ, PsbK, PsbL, PsbM, PsbT, PsbX, PsbY, PsbZ, Psb30/Ycf12, at least 3 peripheral proteins of the oxygen-evolving complex and a large number of cofactors. It forms dimeric complexes. Binds multiple chlorophylls and provides some of the ligands for the Ca-4Mn-5O cluster of the oxygen-evolving complex. It may also provide a ligand for a Cl- that is required for oxygen evolution. PSII binds additional chlorophylls, carotenoids and specific lipids. serves as cofactor.

The protein localises to the plastid. It is found in the chloroplast thylakoid membrane. Functionally, one of the components of the core complex of photosystem II (PSII). It binds chlorophyll and helps catalyze the primary light-induced photochemical processes of PSII. PSII is a light-driven water:plastoquinone oxidoreductase, using light energy to abstract electrons from H(2)O, generating O(2) and a proton gradient subsequently used for ATP formation. The chain is Photosystem II CP43 reaction center protein from Hordeum vulgare (Barley).